A 323-amino-acid polypeptide reads, in one-letter code: MNASCCLPSVQPTLPNGSEHLQAPFFSNQSSSAFCEQVFIKPEVFLSLGIVSLLENILVILAVVRNGNLHSPMYFFLCSLAVADMLVSVSNALETIMIAIVHSDYLTFEDQFIQHMDNIFDSMICISLVASICNLLAIAVDRYVTIFYALRYHSIMTVRKALTLIVAIWVCCGVCGVVFIVYSESKMVIVCLITMFFAMMLLMGTLYVHMFLFARLHVKRIAALPPADGVAPQQHSCMKGAVTITILLGVFIFCWAPFFLHLVLIITCPTNPYCICYTAHFNTYLVLIMCNSVIDPLIYAFRSLELRNTFREILCGCNGMNLG.

The Extracellular portion of the chain corresponds to 1–37 (MNASCCLPSVQPTLPNGSEHLQAPFFSNQSSSAFCEQ). Asparagine 2, asparagine 16, and asparagine 28 each carry an N-linked (GlcNAc...) asparagine glycan. Residues 38 to 63 (VFIKPEVFLSLGIVSLLENILVILAV) traverse the membrane as a helical segment. The Cytoplasmic segment spans residues 64–75 (VRNGNLHSPMYF). A helical transmembrane segment spans residues 76-100 (FLCSLAVADMLVSVSNALETIMIAI). Topologically, residues 101–118 (VHSDYLTFEDQFIQHMDN) are extracellular. A helical transmembrane segment spans residues 119-140 (IFDSMICISLVASICNLLAIAV). Residues 141 to 160 (DRYVTIFYALRYHSIMTVRK) are Cytoplasmic-facing. Residues 161-181 (ALTLIVAIWVCCGVCGVVFIV) traverse the membrane as a helical segment. Over 182-186 (YSESK) the chain is Extracellular. Residues 187–210 (MVIVCLITMFFAMMLLMGTLYVHM) form a helical membrane-spanning segment. At 211 to 245 (FLFARLHVKRIAALPPADGVAPQQHSCMKGAVTIT) the chain is on the cytoplasmic side. A helical membrane pass occupies residues 246 to 268 (ILLGVFIFCWAPFFLHLVLIITC). The Extracellular segment spans residues 269 to 277 (PTNPYCICY). A helical membrane pass occupies residues 278–301 (TAHFNTYLVLIMCNSVIDPLIYAF). At 302-323 (RSLELRNTFREILCGCNGMNLG) the chain is on the cytoplasmic side. Cysteine 315 carries the S-palmitoyl cysteine lipid modification.

Belongs to the G-protein coupled receptor 1 family. As to expression, brain, placental, and gut tissues.

It localises to the cell membrane. Functionally, receptor for MSH (alpha, beta and gamma) and ACTH. This receptor is mediated by G proteins which activate adenylate cyclase. Required for expression of anticipatory patterns of activity and wakefulness during periods of limited nutrient availability and for the normal regulation of circadian clock activity in the brain. This Homo sapiens (Human) protein is Melanocortin receptor 3 (MC3R).